The sequence spans 193 residues: Tetrahydromethanopterin S-methyltransferase subunit A 2 (193 aa).

Residues 1 to 38 are Cytoplasmic-facing; sequence MADKKPTAENWPVVSGDYIVGDPESPVAVTTLASHNED. Residues 39–58 traverse the membrane as a helical segment; it reads IPAAAGAAIAGPCKTENLGI. The Extracellular portion of the chain corresponds to 59–193; it reads EKVVANIISN…SESEKIESEA (135 aa). Histidine 84 is a 5-hydroxybenzimidazolylcob(I)amide binding site. The tract at residues 174–193 is disordered; it reads SKKSSFVESSSESEKIESEA.

This sequence belongs to the MtrA family. The complex is composed of 8 subunits; MtrA, MtrB, MtrC, MtrD, MtrE, MtrF, MtrG and MtrH. It depends on 5-hydroxybenzimidazolylcob(I)amide as a cofactor.

Its subcellular location is the cell membrane. It catalyses the reaction 5-methyl-5,6,7,8-tetrahydromethanopterin + coenzyme M + 2 Na(+)(in) = 5,6,7,8-tetrahydromethanopterin + methyl-coenzyme M + 2 Na(+)(out). It functions in the pathway one-carbon metabolism; methanogenesis from CO(2); methyl-coenzyme M from 5,10-methylene-5,6,7,8-tetrahydromethanopterin: step 2/2. Part of a complex that catalyzes the formation of methyl-coenzyme M and tetrahydromethanopterin from coenzyme M and methyl-tetrahydromethanopterin. This is an energy-conserving, sodium-ion translocating step. The polypeptide is Tetrahydromethanopterin S-methyltransferase subunit A 2 (Methanobrevibacter ruminantium (strain ATCC 35063 / DSM 1093 / JCM 13430 / OCM 146 / M1) (Methanobacterium ruminantium)).